The sequence spans 269 residues: tRNA pseudouridine synthase A (269 aa).

D52 serves as the catalytic Nucleophile. Y110 contacts substrate.

It belongs to the tRNA pseudouridine synthase TruA family. As to quaternary structure, homodimer.

The enzyme catalyses uridine(38/39/40) in tRNA = pseudouridine(38/39/40) in tRNA. Functionally, formation of pseudouridine at positions 38, 39 and 40 in the anticodon stem and loop of transfer RNAs. The protein is tRNA pseudouridine synthase A of Bacteroides thetaiotaomicron (strain ATCC 29148 / DSM 2079 / JCM 5827 / CCUG 10774 / NCTC 10582 / VPI-5482 / E50).